Here is a 430-residue protein sequence, read N- to C-terminus: Asparagine--tRNA ligase (430 aa).

The protein belongs to the class-II aminoacyl-tRNA synthetase family. As to quaternary structure, homodimer.

Its subcellular location is the cytoplasm. The enzyme catalyses tRNA(Asn) + L-asparagine + ATP = L-asparaginyl-tRNA(Asn) + AMP + diphosphate + H(+). This is Asparagine--tRNA ligase from Listeria innocua serovar 6a (strain ATCC BAA-680 / CLIP 11262).